Here is a 403-residue protein sequence, read N- to C-terminus: MFRLRAHGKKPITITTTTTTTASTFLYWSPESSPTALSSPTNLDPNIWSNLPNHLLEHILSLLPFKTLLTLRSISRHLRSLILSPSFISDHSFSLPSFLLLSHPQSFNSFPLFNPNLISWCTLPLPRSLSLTCASSLLSSSNGLLCFSLSPSSVSSLSIFNPLTRSSRSIKLPCYPFPFELLSLVTSPKGYKIFTLCSSSSAASSRSVCLYDSGDRSWRKFGGVDQVLPRGFNQDGVFYNGSLYFARSEPFLIVSVDLNDGKWTTATGDGVFPADDEITFARLVSDPEKKILYMVGGIGSNGICRSIKIWEFKEETESWIEVETLPDIVCRKFTSVCYHNYEHVYCLWHKEMICVCCYNWPEILFFHVGRRTWHWVPKCPSLPEKWSCGFRWFSFVPSLSASV.

Residues 45–91 enclose the F-box domain; that stretch reads PNIWSNLPNHLLEHILSLLPFKTLLTLRSISRHLRSLILSPSFISDH. Kelch repeat units follow at residues 91–140, 192–240, 291–339, and 343–393; these read HSFS…LLSS, KIFT…VFYN, ILYM…VCYH, and HVYC…FRWF.

This Arabidopsis thaliana (Mouse-ear cress) protein is F-box/kelch-repeat protein At5g43190.